The chain runs to 445 residues: Secretin receptor (445 aa).

An N-terminal signal peptide occupies residues 1–21 (MCPRPGPPLGLWLLLGFACAA). At 22 to 137 (HLVGAPPRLC…HERQHAYLLK (116 aa)) the chain is on the extracellular side. 3 disulfide bridges follow: cysteine 44–cysteine 71, cysteine 62–cysteine 103, and cysteine 85–cysteine 119. Residues asparagine 68, asparagine 96, asparagine 102, and asparagine 124 are each glycosylated (N-linked (GlcNAc...) asparagine). The chain crosses the membrane as a helical span at residues 138–163 (LKVMYTVGYSSSLVMLLVALGILCAF). At 164–170 (RRLHCTR) the chain is on the cytoplasmic side. The helical transmembrane segment at 171–191 (NYIHMHLFLSFILRALSNFIK) threads the bilayer. Residues 192–212 (DAVLFSSDDAIHCDAHRVGCK) are Extracellular-facing. Cysteine 211 and cysteine 281 are joined by a disulfide. A helical membrane pass occupies residues 213–235 (LVMVFFQYCIMANYAWLLVEGLY). The Cytoplasmic segment spans residues 236–250 (LHSLLVVSFFSERKC). A helical membrane pass occupies residues 251–272 (LQGFVVLGWGSPAMFVTSWAVT). Over 273–287 (RHFLEDSGCWDINAN) the chain is Extracellular. The helical transmembrane segment at 288–311 (AAIWWVIRGPVILSILINFILFIN) threads the bilayer. Residues 312 to 336 (ILRILTRKLRTQETRGQDMNHYKRL) lie on the Cytoplasmic side of the membrane. Residues 337 to 352 (ARSTLLLIPLFGVHYI) traverse the membrane as a helical segment. Residues 353-363 (VFVFSPEGAME) are Extracellular-facing. A helical membrane pass occupies residues 364–387 (IQLFFELALGSFQGLVVAVLYCFL). Topologically, residues 388–445 (NGEVQLEVQKKWQQWHLWEPPLCPVALSSSFSNGTSSLNSTKACPSGRSRDTCKVSII) are cytoplasmic.

It belongs to the G-protein coupled receptor 2 family. In terms of processing, phosphorylated on Ser and Thr residues at the cytoplasmic C-terminus by G protein-coupled receptor kinases (GRKs).

The protein localises to the cell membrane. It localises to the basolateral cell membrane. Its function is as follows. G protein-coupled receptor activated by secretin (SCT), which is involved in different processes such as regulation of the pH of the duodenal content, food intake and water homeostasis. Ligand binding causes a conformation change that triggers signaling via guanine nucleotide-binding proteins (G proteins) and activates cAMP-dependent pathway. Upon binding to secretin, regulates the pH of the duodenum by (1) inhibiting the secretion of gastric acid from the parietal cells of the stomach and (2) stimulating the production of bicarbonate (NaHCO(3)) from the ductal cells of the pancreas. In addition to regulating the pH of the duodenal content, plays a central role in diet induced thermogenesis: acts as a non-sympathetic brown fat (BAT) activator mediating prandial thermogenesis, which consequentially induces satiation. Mechanistically, secretin released by the gut after a meal binds to secretin receptor (SCTR) in brown adipocytes, activating brown fat thermogenesis by stimulating lipolysis, which is sensed in the brain and promotes satiation. Also able to stimulate lipolysis in white adipocytes. Also plays an important role in cellular osmoregulation by regulating renal water reabsorption. Also plays a role in the central nervous system: required for synaptic plasticity. The sequence is that of Secretin receptor (SCTR) from Oryctolagus cuniculus (Rabbit).